A 966-amino-acid chain; its full sequence is Probable transport protein MmpL11 (966 aa).

The next 12 membrane-spanning stretches (helical) occupy residues 13–33 (WLVF…AMTQ), 188–208 (IILM…IPLA), 214–234 (VVIT…SVFV), 235–255 (TSTV…FILM), 279–299 (GLAV…IYLI), 311–331 (AILA…AVLA), 373–393 (ALAA…MVLG), 527–547 (TQPL…LISI), 557–577 (VLMT…VFQW), 595–615 (VPPL…IFLL), 646–666 (AALI…PLVA), and 668–688 (IGVA…LVLV).

It belongs to the resistance-nodulation-cell division (RND) (TC 2.A.6) family. MmpL subfamily.

Its subcellular location is the cell membrane. This chain is Probable transport protein MmpL11 (mmpL11), found in Mycobacterium bovis (strain ATCC BAA-935 / AF2122/97).